Consider the following 233-residue polypeptide: Antilisterial bacteriocin subtilosin biosynthesis protein AlbG (233 aa).

The next 6 helical transmembrane spans lie at 7–27 (FTLL…VQAV), 46–66 (GLLA…LHYV), 116–136 (TYVM…FEIV), 145–165 (TPPA…LFCM), 176–198 (GSLF…MLSF), and 203–220 (LLFL…SFIY).

Its subcellular location is the cell membrane. Functionally, involved in the production of the bacteriocin subtilosin. The polypeptide is Antilisterial bacteriocin subtilosin biosynthesis protein AlbG (albG) (Bacillus subtilis (strain 168)).